The sequence spans 65 residues: Muscarinic toxin-like protein 3 (65 aa).

4 disulfide bridges follow: Cys3/Cys24, Cys17/Cys41, Cys45/Cys57, and Cys58/Cys63.

Homodimer; non-covalently linked. As to expression, expressed by the venom gland.

The protein localises to the secreted. In terms of biological role, antagonist of muscle and neuronal nicotinic acetylcholine receptors (nAChR) with highest affinity for neuronal alpha-7/CHRNA7 nAChRs. The polypeptide is Muscarinic toxin-like protein 3 (Naja kaouthia (Monocled cobra)).